Here is a 317-residue protein sequence, read N- to C-terminus: Beta-ketoacyl-[acyl-carrier-protein] synthase III (317 aa).

Catalysis depends on residues Cys112 and His244. Positions 245-249 are ACP-binding; the sequence is QANLR. Asn274 is a catalytic residue.

The protein belongs to the thiolase-like superfamily. FabH family. Homodimer.

It localises to the cytoplasm. It carries out the reaction malonyl-[ACP] + acetyl-CoA + H(+) = 3-oxobutanoyl-[ACP] + CO2 + CoA. The protein operates within lipid metabolism; fatty acid biosynthesis. Its function is as follows. Catalyzes the condensation reaction of fatty acid synthesis by the addition to an acyl acceptor of two carbons from malonyl-ACP. Catalyzes the first condensation reaction which initiates fatty acid synthesis and may therefore play a role in governing the total rate of fatty acid production. Possesses both acetoacetyl-ACP synthase and acetyl transacylase activities. Its substrate specificity determines the biosynthesis of branched-chain and/or straight-chain of fatty acids. The chain is Beta-ketoacyl-[acyl-carrier-protein] synthase III from Serratia proteamaculans (strain 568).